The primary structure comprises 140 residues: Nucleoside diphosphate kinase (140 aa).

Residues Lys11, Phe59, Arg87, Thr93, Arg104, and Asn114 each contribute to the ATP site. His117 functions as the Pros-phosphohistidine intermediate in the catalytic mechanism.

The protein belongs to the NDK family. Homotetramer. Mg(2+) is required as a cofactor.

The protein localises to the cytoplasm. It carries out the reaction a 2'-deoxyribonucleoside 5'-diphosphate + ATP = a 2'-deoxyribonucleoside 5'-triphosphate + ADP. The catalysed reaction is a ribonucleoside 5'-diphosphate + ATP = a ribonucleoside 5'-triphosphate + ADP. Major role in the synthesis of nucleoside triphosphates other than ATP. The ATP gamma phosphate is transferred to the NDP beta phosphate via a ping-pong mechanism, using a phosphorylated active-site intermediate. The protein is Nucleoside diphosphate kinase of Jannaschia sp. (strain CCS1).